The sequence spans 301 residues: 1,5-anhydro-D-fructose reductase (301 aa).

Residue aspartate 35 coordinates NADP(+). Catalysis depends on tyrosine 40, which acts as the Proton donor. Residue histidine 102 coordinates substrate. NADP(+) contacts are provided by residues glutamine 175 and 246 to 258 (IPKS…IREN).

It belongs to the aldo/keto reductase family. Monomer.

The protein resides in the cytoplasm. It carries out the reaction 1,5-anhydro-D-glucitol + NADP(+) = 1,5-anhydro-D-fructose + NADPH + H(+). Its activity is regulated as follows. Inhibited by p-chloromercuribenzoic acid and alkyliodines. Its function is as follows. Catalyzes the NADPH-dependent reduction of 1,5-anhydro-D-fructose (AF) to 1,5-anhydro-D-glucitol. This Mus musculus (Mouse) protein is 1,5-anhydro-D-fructose reductase (Akr1e2).